A 301-amino-acid polypeptide reads, in one-letter code: Transcription factor bHLH103 (301 aa).

The KRAB domain maps to 29–106 (PRSAEIVVDF…LEGLFDSSEQ (78 aa)). Disordered regions lie at residues 161–184 (EKSGELEDIESSQPLKRPRLETPS) and 239–272 (TSPHLNSIGSGEQKQWSDKSSNNTHNQNCSPRQD). Residues 180–229 (LETPSHFPSFKVRKEKLGDRITALQQLVSPFGKTDTASVLHDAIDYIKFL) form the bHLH domain. A compositionally biased stretch (polar residues) spans 239-269 (TSPHLNSIGSGEQKQWSDKSSNNTHNQNCSP).

Homodimer. Mature root endodermis.

It is found in the nucleus. The sequence is that of Transcription factor bHLH103 (BHLH103) from Arabidopsis thaliana (Mouse-ear cress).